A 525-amino-acid chain; its full sequence is G patch domain-containing protein 3 (525 aa).

A disordered region spans residues 264–316 (YLADIPASPCGEPEEEVGKEEEEESHSDEDDDRGEEWERHEALHEDVTGQERT). Residues 275–298 (EPEEEVGKEEEEESHSDEDDDRGE) are compositionally biased toward acidic residues. Basic and acidic residues predominate over residues 299 to 316 (EWERHEALHEDVTGQERT). The G-patch domain maps to 410 to 458 (TKGIGRKVMERQGWAEGQGLGCRCSGVPEALDSDGQHPRCKRGLGYHGE).

As to quaternary structure, interacts with mitochondrial MAVS; the interaction is markedly increased upon viral infection. Expressed in ocular tissues including retinal pigment epithelium, cornea, ciliary muscle and non-pigmented ciliary epithelium. Also expressed in optic nerve, cartilage, skin and lymph node.

The protein resides in the nucleus. It localises to the cytoplasm. Its function is as follows. Involved in transcriptional regulation. It is able to activate transcription from the CXCR4 promoter and therefore it might control neural crest cell migration involved in ocular and craniofacial development. Is a negative regulator of immune antiviral response, acting via down-regulation of RIG-I-like receptors signaling and inhibition of type I interferon production. The control mechanism involves interaction with mitochondrial MAVS and inhibition of MAVS assembly with downstream proteins implicated in antiviral response, such as TBK1 and TRAF6. This Homo sapiens (Human) protein is G patch domain-containing protein 3 (GPATCH3).